The following is a 611-amino-acid chain: MAASAKKKNKKGKTISLTDFLAEDGGTGGGSTYVPKPVSWADETDDLEGDVSTTWHSNDDDVYRAPPIDRSILPTAPRAAREPNIDRSRLPKSPPYTAFLGNLPYDVTEDSIKDFFRGLNISAVRLPREPSNPDRLKGFGYAEFEDLDSLLSALSLNEESLGNRRIRVDVADQAQDKDRDDRSFGRDRNRDSDKTDTDWRARPTTDSFDDYPPRRGDDSFGDKYRDRYDSDRYRDGYRDGYRDGPRRDMDRYGGRDRYDDRGSRDYDRGYDSRIGSGRRAFGSGYRRDDDYRGGGDRYEDRYDRRDDRSWSSRDDYSRDDYRRDDRGPPQRPRLNLKPRSAPKEDDASASTSQSSRAASIFGGAKPVDTAAREREVEERLQKEQEKLQRQLDEPKLDRRPRERHPSWRSEETQERERSRTGSESSQTGASATSGRNTRRRESEKSLENETLNKEEDCHSPTSKPPKPDQPLKVMPAPPPKENAWVKRSSNPPARSQSSDTEQPSPTSGGGKVAAVQPPEEGPSRKDGNKVDVVGATQGQAGSCSRGPGDGGSRDHWKDLDRKDGKKDQDSRSAPEPKKPEENPASKFSSASKYAALSVDGEDEDEGDDCTE.

The span at 1–13 (MAASAKKKNKKGK) shows a compositional bias: basic residues. 2 disordered regions span residues 1 to 93 (MAAS…LPKS) and 173 to 611 (QAQD…DCTE). Over residues 79-89 (AAREPNIDRSR) the composition is skewed to basic and acidic residues. Ser93 bears the Phosphoserine mark. The region spanning 96–173 (YTAFLGNLPY…RRIRVDVADQ (78 aa)) is the RRM domain. Over residues 173–203 (QAQDKDRDDRSFGRDRNRDSDKTDTDWRARP) the composition is skewed to basic and acidic residues. Phosphoserine occurs at positions 192, 207, 219, and 283. The span at 211-271 (YPPRRGDDSF…GSRDYDRGYD (61 aa)) shows a compositional bias: basic and acidic residues. Positions 285-328 (YRRDDDYRGGGDRYEDRYDRRDDRSWSSRDDYSRDDYRRDDRGP) are enriched in basic and acidic residues. Residue Lys343 forms a Glycyl lysine isopeptide (Lys-Gly) (interchain with G-Cter in SUMO2) linkage. The segment covering 348–359 (SASTSQSSRAAS) has biased composition (low complexity). At Ser359 the chain carries Phosphoserine. The residue at position 365 (Lys365) is an N6-acetyllysine. Over residues 370 to 420 (AAREREVEERLQKEQEKLQRQLDEPKLDRRPRERHPSWRSEETQERERSRT) the composition is skewed to basic and acidic residues. Ser406 bears the Phosphoserine; by RPS6KA1 mark. Ser409 is modified (phosphoserine). Residue Thr412 is modified to Phosphothreonine. The residue at position 418 (Ser418) is a Phosphoserine. Ser422 is subject to Phosphoserine; by RPS6KA1. 6 positions are modified to phosphoserine: Ser425, Ser445, Ser459, Ser462, Ser497, and Ser498. Residues 439–458 (RRESEKSLENETLNKEEDCH) show a composition bias toward basic and acidic residues. Over residues 487-506 (RSSNPPARSQSSDTEQPSPT) the composition is skewed to polar residues. Thr500 carries the phosphothreonine modification. Ser504 bears the Phosphoserine mark. Thr506 is subject to Phosphothreonine. A compositionally biased stretch (basic and acidic residues) spans 551 to 583 (GSRDHWKDLDRKDGKKDQDSRSAPEPKKPEENP). A compositionally biased stretch (low complexity) spans 584-597 (ASKFSSASKYAALS). At Lys586 the chain carries N6-acetyllysine. Position 597 is a phosphoserine (Ser597). The segment covering 599–611 (DGEDEDEGDDCTE) has biased composition (acidic residues).

As to quaternary structure, self-associates and interacts with EIF3 p170 subunit. In terms of processing, phosphorylated at Ser-422 by RPS6KA1 and RPS6KB1; phosphorylation enhances the affinity of EIF4B for the EIF3 complex. In response to mTORC1 activation, RPS6KA1-mediated phosphorylation at 'Ser-406' and 'Ser-422' stimulates bicarbonate cotransporter SLC4A7 mRNA translation, increasing SLC4A7 protein abundance and function.

Functionally, required for the binding of mRNA to ribosomes. Functions in close association with EIF4-F and EIF4-A. Binds near the 5'-terminal cap of mRNA in presence of EIF-4F and ATP. Promotes the ATPase activity and the ATP-dependent RNA unwinding activity of both EIF4-A and EIF4-F. This Mus musculus (Mouse) protein is Eukaryotic translation initiation factor 4B (Eif4b).